A 221-amino-acid polypeptide reads, in one-letter code: 7-cyano-7-deazaguanine synthase (221 aa).

An ATP-binding site is contributed by 10 to 20 (FSGGQDSTTCL). Residues C187, C196, C199, and C202 each coordinate Zn(2+).

It belongs to the QueC family. As to quaternary structure, homodimer. Requires Zn(2+) as cofactor.

The enzyme catalyses 7-carboxy-7-deazaguanine + NH4(+) + ATP = 7-cyano-7-deazaguanine + ADP + phosphate + H2O + H(+). Its pathway is purine metabolism; 7-cyano-7-deazaguanine biosynthesis. In terms of biological role, catalyzes the ATP-dependent conversion of 7-carboxy-7-deazaguanine (CDG) to 7-cyano-7-deazaguanine (preQ(0)). The protein is 7-cyano-7-deazaguanine synthase of Shouchella clausii (strain KSM-K16) (Alkalihalobacillus clausii).